Consider the following 290-residue polypeptide: 3-keto-disaccharide hydrolase (290 aa).

An N-terminal signal peptide occupies residues 1–19; it reads MKKVFYPLACCLAAGVLVS. Cys-20 carries N-palmitoyl cysteine lipidation. Cys-20 carries S-diacylglycerol cysteine lipidation.

The protein resides in the cell membrane. It carries out the reaction 3-dehydro-alpha,alpha-trehalose + H2O = 3-dehydro-D-glucose + D-glucose. 3-keto-disaccharide hydrolase that preferentially hydrolyzes 3-keto-trehalose (3-dehydro-alpha,alpha-trehalose). Important for disaccharide utilization in the human gut. Also shows hydrolysis activity with the glucosinolates glucoraphanin or glucobrassicin, but with much lower efficiency. The sequence is that of 3-keto-disaccharide hydrolase from Bacteroides thetaiotaomicron (strain ATCC 29148 / DSM 2079 / JCM 5827 / CCUG 10774 / NCTC 10582 / VPI-5482 / E50).